Consider the following 450-residue polypeptide: MKTVTEFQNKNILVLGIAKSGYAAATLLQKLGANVIVNDGKPLAENVLAAELQAKGMDVVCGGHPLELLERNISLVVKNPGIPYSNPILVAAKEKQIPIVTEVELAYRISEAPFVGITGSNGKTTTTMLTFEMLKEGQKHPVIAGNIGTVACEVAQDAKENEVVVTELSSFQLMGVELFQPKIAAFLNLFEAHLDYHGTKKEYGLAKANIFKNQTENDYSVINADDADVMALSAYSKGQKVLFSTTKEIEDGACIKDNALYFKGEKVVEVGDIVLPGQHNLENILAAMSIAKLLGVSNEAITAVLKRFTGVKHRLEYVTTINNRKFYNDSKATNMLATEKALSAFTQPTVLLAGGLDRGNEFDDLIPYFKNVKAIVTFGQTAPKLVRAAEKAGLDTIESVDTLDEAVVKAYAHSTDGDVILLSPACASWDQFKTFEERGDIFIQAVHKLI.

119 to 125 (GSNGKTT) is an ATP binding site.

It belongs to the MurCDEF family.

The protein resides in the cytoplasm. It catalyses the reaction UDP-N-acetyl-alpha-D-muramoyl-L-alanine + D-glutamate + ATP = UDP-N-acetyl-alpha-D-muramoyl-L-alanyl-D-glutamate + ADP + phosphate + H(+). Its pathway is cell wall biogenesis; peptidoglycan biosynthesis. Functionally, cell wall formation. Catalyzes the addition of glutamate to the nucleotide precursor UDP-N-acetylmuramoyl-L-alanine (UMA). The sequence is that of UDP-N-acetylmuramoylalanine--D-glutamate ligase from Bacillus cereus (strain Q1).